The following is a 491-amino-acid chain: Serine/threonine-protein kinase 3 (491 aa).

M1 is subject to N-acetylmethionine. Position 15 is a phosphoserine (S15). The region spanning 27 to 278 is the Protein kinase domain; sequence FDVLEKLGEG…ATQLLQHPFI (252 aa). ATP is bound by residues 33–41 and K56; that span reads LGEGSYGSV. A Phosphothreonine; by PKB/AKT1 modification is found at T117. Residue D146 is the Proton acceptor of the active site. Mg(2+)-binding residues include N151 and D164. The residue at position 180 (T180) is a Phosphothreonine; by autocatalysis. Residues 291-324 adopt a coiled-coil conformation; that stretch reads ITEGMEIKAKRHEEQQRELEDEEENSDEDELDSH. Disordered stretches follow at residues 301–343 and 370–392; these read RHEE…TSTM and EDEEEEDGTMKRNATSPQVQRPS. The segment covering 309–321 has biased composition (acidic residues); that stretch reads LEDEEENSDEDEL. Phosphoserine is present on S316. A compositionally biased stretch (polar residues) spans 326 to 343; sequence MVKTSSEGVGTMRATSTM. T336 and T378 each carry phosphothreonine. Residues 381 to 390 show a composition bias toward polar residues; that stretch reads RNATSPQVQR. T384 carries the phosphothreonine; by PKB/AKT1 modification. Phosphoserine is present on residues S385 and S444. The 48-residue stretch at 437 to 484 folds into the SARAH domain; that stretch reads FDFLKNLSLEELQMRLKALDPMMEREIEELHQRYSAKRQPILDAMDAK.

Belongs to the protein kinase superfamily. STE Ser/Thr protein kinase family. STE20 subfamily. As to quaternary structure, homodimer; mediated via the coiled-coil region. Interacts with NORE1, which inhibits autoactivation. Interacts with and stabilizes SAV1. Interacts with RAF1, which prevents dimerization and phosphorylation. Interacts with RASSF1. Interacts (via SARAH domain) with isoform 1 of NEK2. Interacts with ESR1 only in the presence of SAV1. Interacts with PKB/AKT1. Forms a tripartite complex with MOBKL1B and STK38. Interacts with RASSF2 (via SARAH domain). Interacts with DLG5 (via PDZ domain 3). Interacts with LATS1; this interaction is inhibited in the presence of DLG5. Interacts with MARK3 in the presence of DLG5. Interacts with RASSF5; this interaction inhibits STK3 autoactivation through heterodimerization. Interacts (when phosphorylated) with SLMAP (via FHA domain); the interaction associates STK3 with the STRIPAK complex. The cofactor is Mg(2+). Post-translationally, autophosphorylated on two residues Thr-174 and Thr-180, leading to activation. Phosphorylation at Thr-117 and Thr-384 by PKB/AKT1, leads to inhibition of its: cleavage, kinase activity, autophosphorylation at Thr-180, binding to RASSF1 and nuclear translocation, and increase in its binding to RAF1. Phosphorylated at Ser-15 by PLK1, leading to activation. In terms of processing, proteolytically cleaved by caspase-3 during apoptosis. Proteolytic cleavage results in kinase activation and nuclear translocation of the truncated form (MST1/N). Ubiquitinated by TRIM69; leading to its redistribution to the perinuclear cytoskeleton.

Its subcellular location is the cytoplasm. It is found in the nucleus. It catalyses the reaction L-seryl-[protein] + ATP = O-phospho-L-seryl-[protein] + ADP + H(+). The enzyme catalyses L-threonyl-[protein] + ATP = O-phospho-L-threonyl-[protein] + ADP + H(+). With respect to regulation, inhibited by the C-terminal non-catalytic region. Activated by caspase-cleavage. Full activation also requires homodimerization and autophosphorylation of Thr-180, which are inhibited by the proto-oncogene product RAF1. Activated by RASSF1 which acts by preventing its dephosphorylation. When autophosphorylated at Thr-180, recruits STRIPAK complex and promotes PP2A-mediated dephosphorylation and inactivation of STK3. In terms of biological role, stress-activated, pro-apoptotic kinase which, following caspase-cleavage, enters the nucleus and induces chromatin condensation followed by internucleosomal DNA fragmentation. Key component of the Hippo signaling pathway which plays a pivotal role in organ size control and tumor suppression by restricting proliferation and promoting apoptosis. The core of this pathway is composed of a kinase cascade wherein STK3/MST2 and STK4/MST1, in complex with its regulatory protein SAV1, phosphorylates and activates LATS1/2 in complex with its regulatory protein MOB1, which in turn phosphorylates and inactivates YAP1 oncoprotein and WWTR1/TAZ. Phosphorylation of YAP1 by LATS2 inhibits its translocation into the nucleus to regulate cellular genes important for cell proliferation, cell death, and cell migration. STK3/MST2 and STK4/MST1 are required to repress proliferation of mature hepatocytes, to prevent activation of facultative adult liver stem cells (oval cells), and to inhibit tumor formation. Phosphorylates NKX2-1. Phosphorylates NEK2 and plays a role in centrosome disjunction by regulating the localization of NEK2 to centrosomes, and its ability to phosphorylate CROCC and CEP250. In conjunction with SAV1, activates the transcriptional activity of ESR1 through the modulation of its phosphorylation. Positively regulates RAF1 activation via suppression of the inhibitory phosphorylation of RAF1 on 'Ser-259'. Phosphorylates MOBKL1A and RASSF2. Phosphorylates MOBKL1B on 'Thr-74'. Acts cooperatively with MOBKL1B to activate STK38. This chain is Serine/threonine-protein kinase 3 (Stk3), found in Rattus norvegicus (Rat).